Here is a 305-residue protein sequence, read N- to C-terminus: Dihydroorotate dehydrogenase B (NAD(+)), catalytic subunit (305 aa).

FMN is bound by residues S21 and 45-46 (KA). Substrate-binding positions include K45 and 69 to 73 (NAIGL). 2 residues coordinate FMN: N99 and N127. N127 is a substrate binding site. The active-site Nucleophile is the C130. FMN-binding residues include K165 and I190. Substrate is bound at residue 191–192 (NT). FMN-binding positions include G216, 242 to 243 (GG), and 264 to 265 (GT).

Belongs to the dihydroorotate dehydrogenase family. Type 1 subfamily. In terms of assembly, heterotetramer of 2 PyrK and 2 PyrD type B subunits. FMN serves as cofactor.

It localises to the cytoplasm. The catalysed reaction is (S)-dihydroorotate + NAD(+) = orotate + NADH + H(+). It functions in the pathway pyrimidine metabolism; UMP biosynthesis via de novo pathway; orotate from (S)-dihydroorotate (NAD(+) route): step 1/1. In terms of biological role, catalyzes the conversion of dihydroorotate to orotate with NAD(+) as electron acceptor. The polypeptide is Dihydroorotate dehydrogenase B (NAD(+)), catalytic subunit (pyrD) (Staphylococcus carnosus (strain TM300)).